A 430-amino-acid chain; its full sequence is Histidine--tRNA ligase, chloroplastic (430 aa).

Belongs to the class-II aminoacyl-tRNA synthetase family.

It is found in the plastid. The protein localises to the chloroplast. It carries out the reaction tRNA(His) + L-histidine + ATP = L-histidyl-tRNA(His) + AMP + diphosphate + H(+). The chain is Histidine--tRNA ligase, chloroplastic (hisS) from Porphyra purpurea (Red seaweed).